Here is a 176-residue protein sequence, read N- to C-terminus: Large ribosomal subunit protein uL10 (176 aa).

It belongs to the universal ribosomal protein uL10 family. In terms of assembly, part of the ribosomal stalk of the 50S ribosomal subunit. The N-terminus interacts with L11 and the large rRNA to form the base of the stalk. The C-terminus forms an elongated spine to which L12 dimers bind in a sequential fashion forming a multimeric L10(L12)X complex.

Functionally, forms part of the ribosomal stalk, playing a central role in the interaction of the ribosome with GTP-bound translation factors. This Thioalkalivibrio sulfidiphilus (strain HL-EbGR7) protein is Large ribosomal subunit protein uL10.